The primary structure comprises 201 residues: Large ribosomal subunit protein uL4 (201 aa).

A disordered region spans residues 44-71; the sequence is RAQKTRAEVSGSGKKPWRQKGTGRARSG.

It belongs to the universal ribosomal protein uL4 family. As to quaternary structure, part of the 50S ribosomal subunit.

Its function is as follows. One of the primary rRNA binding proteins, this protein initially binds near the 5'-end of the 23S rRNA. It is important during the early stages of 50S assembly. It makes multiple contacts with different domains of the 23S rRNA in the assembled 50S subunit and ribosome. Forms part of the polypeptide exit tunnel. In Proteus mirabilis (strain HI4320), this protein is Large ribosomal subunit protein uL4.